Reading from the N-terminus, the 397-residue chain is Homeobox protein knotted-1-like 2 (397 aa).

3 disordered regions span residues 43–68 (TFHL…SPGT), 172–191 (FEAR…DPEL), and 233–276 (NNNA…PRAE). The segment covering 49-58 (SGGGGGGGSG) has biased composition (gly residues). In terms of domain architecture, ELK spans 279–299 (ELKNHLLRKYSGYLSSLKQEL). Positions 300 to 363 (SKKKKKGKLP…NQRKRHWKPS (64 aa)) form a DNA-binding region, homeobox; TALE-type.

Belongs to the TALE/KNOX homeobox family. Expressed only in the stems.

Its subcellular location is the nucleus. Its function is as follows. Probably binds to the DNA sequence 5'-TGAC-3'. This chain is Homeobox protein knotted-1-like 2, found in Malus domestica (Apple).